The sequence spans 570 residues: Zinc finger protein 76 (570 aa).

A Glycyl lysine isopeptide (Lys-Gly) (interchain with G-Cter in SUMO2) cross-link involves residue K24. 3 consecutive repeat copies span residues 34-45, 62-73, and 88-99. Residues 34–99 are 3 X 12 AA approximate repeats; the sequence is IQLEDGTTAY…LEDGSTAYIH (66 aa). 7 consecutive C2H2-type zinc fingers follow at residues 165 to 189, 195 to 219, 225 to 249, 255 to 279, 285 to 309, 315 to 339, and 345 to 368; these read FRCG…ERAH, YRCD…VRTH, YKCP…VRTH, FQCP…VRTH, YTCP…VRIH, YVCT…HVVH, and YTCS…RSAH. Residues 365-401 form a disordered region; it reads RSAHGELEATEESEQALYEQQQLEAASAAEESPPPKR. Residues 379 to 395 show a composition bias toward low complexity; that stretch reads QALYEQQQLEAASAAEE.

The protein belongs to the krueppel C2H2-type zinc-finger protein family. Testis.

The protein resides in the nucleus. Functionally, may be involved in transcriptional regulation. The protein is Zinc finger protein 76 (ZNF76) of Homo sapiens (Human).